A 215-amino-acid polypeptide reads, in one-letter code: Cytochrome b-c1 complex subunit Rieske, mitochondrial (215 aa).

The N-terminal 22 residues, 1–22 (MLGIRSSVKTCFKPMSLTSKRL), are a transit peptide targeting the mitochondrion. The propeptide at 23–30 (ISQSLLAS) is removed in mature form. Topologically, residues 31 to 50 (KSTYRTPNFDDVLKENNDAD) are mitochondrial matrix. A helical transmembrane segment spans residues 51–80 (KGRSYAYFMVGAMGLLSSAGAKSTVETFIS). Residues 81-215 (SMTATADVLA…EFDGDKVIVG (135 aa)) are Mitochondrial intermembrane-facing. The segment at 90-93 (AMAK) is hinge. Residues 123 to 214 (PHEIQEANSV…YEFDGDKVIV (92 aa)) form the Rieske domain. Residues Cys-159, His-161, Cys-178, and His-181 each contribute to the [2Fe-2S] cluster site. Cys-164 and Cys-180 are oxidised to a cystine.

The protein belongs to the Rieske iron-sulfur protein family. In terms of assembly, component of the ubiquinol-cytochrome c oxidoreductase (cytochrome b-c1 complex, complex III, CIII), a multisubunit enzyme composed of 10 subunits. The complex is composed of 3 respiratory subunits cytochrome b (COB), cytochrome c1 (CYT1) and Rieske protein (RIP1), 2 core protein subunits COR1 and QCR2, and 5 low-molecular weight protein subunits QCR6, QCR7, QCR8, QCR9 and QCR10. The complex exists as an obligatory dimer and forms supercomplexes (SCs) in the inner mitochondrial membrane with a monomer or a dimer of cytochrome c oxidase (complex IV, CIV), resulting in 2 different assemblies (supercomplexes III(2)IV and III(2)IV(2)). RIP1 interacts with QCR10 on the intermembrane space (IMS) side, and with QCR9. [2Fe-2S] cluster serves as cofactor. In terms of processing, processed by both the mitochondrial processing peptidase (MPP) and the mitochondrial intermediate protease (MIP). Initially, MPP removes 22 amino acids from the newly imported precursor in the mitochondrial matrix. This proteolytic processing is then followed by a second proteolytic cleavage by MIP, which removes an octapeptide to generate mature-sized RIP1.

It is found in the mitochondrion inner membrane. The enzyme catalyses a quinol + 2 Fe(III)-[cytochrome c](out) = a quinone + 2 Fe(II)-[cytochrome c](out) + 2 H(+)(out). Its function is as follows. Component of the ubiquinol-cytochrome c oxidoreductase, a multisubunit transmembrane complex that is part of the mitochondrial electron transport chain which drives oxidative phosphorylation. The respiratory chain contains 3 multisubunit complexes succinate dehydrogenase (complex II, CII), ubiquinol-cytochrome c oxidoreductase (cytochrome b-c1 complex, complex III, CIII) and cytochrome c oxidase (complex IV, CIV), that cooperate to transfer electrons derived from NADH and succinate to molecular oxygen, creating an electrochemical gradient over the inner membrane that drives transmembrane transport and the ATP synthase. The cytochrome b-c1 complex catalyzes electron transfer from ubiquinol to cytochrome c, linking this redox reaction to translocation of protons across the mitochondrial inner membrane, with protons being carried across the membrane as hydrogens on the quinol. In the process called Q cycle, 2 protons are consumed from the matrix, 4 protons are released into the intermembrane space and 2 electrons are passed to cytochrome c. The Rieske protein is a catalytic core subunit containing a [2Fe-2S] iron-sulfur cluster. It cycles between 2 conformational states during catalysis to transfer electrons from the quinol bound in the Q(0) site in cytochrome b (COB) to cytochrome c1 (CYT1). The protein is Cytochrome b-c1 complex subunit Rieske, mitochondrial (RIP1) of Saccharomyces cerevisiae (strain ATCC 204508 / S288c) (Baker's yeast).